The following is a 157-amino-acid chain: Protein SINE4 (157 aa).

Residues 104-157 (VTSSSDTTKAKKKTTIRRFVSVTMVLLLSWVLVVLMNHFDHLSMNTQIITLVPT) form the KASH domain. The chain crosses the membrane as a helical span at residues 122-142 (FVSVTMVLLLSWVLVVLMNHF). The Required for nuclear localization motif lies at 154 to 157 (LVPT).

As to quaternary structure, interacts with SUN1 and SUN2.

Its subcellular location is the nucleus membrane. The protein is Protein SINE4 of Arabidopsis thaliana (Mouse-ear cress).